Here is a 451-residue protein sequence, read N- to C-terminus: Cyclin-dependent kinase 14 (451 aa).

A phosphoserine mark is found at Ser-60 and Ser-77. A disordered region spans residues 84–114; it reads NFKTSSTGKESPKVRRHSSPSSPTSPKFGKA. The residue at position 116 (Ser-116) is a Phosphoserine. The 285-residue stretch at 117-401 folds into the Protein kinase domain; the sequence is YEKLEKLGEG…AQAALSHEYF (285 aa). ATP is bound by residues 123-131 and Lys-146; that span reads LGEGSYATV. Asp-238 functions as the Proton acceptor in the catalytic mechanism.

It belongs to the protein kinase superfamily. CMGC Ser/Thr protein kinase family. CDC2/CDKX subfamily. Found in a complex with LRP6, CCNY and CAPRIN2 during G2/M stage; CAPRIN2 functions as a scaffold for the complex by binding to CCNY via its N terminus and to CDK14 via its C terminus. Interacts with CCNY; CCNY mediates its recruitment to the plasma membrane and promotes phosphorylation of LRP6. Interacts with CCDN3 and CDKN1A. Interacts with SEPT8. Interacts with 14-3-3 proteina YWHAB, YWHAE, YWHAH and YWHAQ.

It localises to the cell membrane. Its subcellular location is the cytoplasm. The protein resides in the nucleus. The catalysed reaction is L-seryl-[protein] + ATP = O-phospho-L-seryl-[protein] + ADP + H(+). It carries out the reaction L-threonyl-[protein] + ATP = O-phospho-L-threonyl-[protein] + ADP + H(+). Its activity is regulated as follows. Serine/threonine-protein kinase activity is promoted by associated cyclins CCDN3 and CCNY and repressed by CDKN1A. Functionally, serine/threonine-protein kinase involved in the control of the eukaryotic cell cycle, whose activity is controlled by an associated cyclin. Acts as a cell-cycle regulator of Wnt signaling pathway during G2/M phase by mediating the phosphorylation of LRP6 at 'Ser-1490', leading to the activation of the Wnt signaling pathway. Acts as a regulator of cell cycle progression and cell proliferation via its interaction with CCDN3. Phosphorylates RB1 in vitro, however the relevance of such result remains to be confirmed in vivo. May also play a role in meiosis, neuron differentiation and may indirectly act as a negative regulator of insulin-responsive glucose transport. The protein is Cyclin-dependent kinase 14 (CDK14) of Plecturocebus moloch (Dusky titi monkey).